We begin with the raw amino-acid sequence, 155 residues long: 3-hydroxyacyl-[acyl-carrier-protein] dehydratase FabZ (155 aa).

His-59 is an active-site residue.

It belongs to the thioester dehydratase family. FabZ subfamily.

The protein localises to the cytoplasm. It carries out the reaction a (3R)-hydroxyacyl-[ACP] = a (2E)-enoyl-[ACP] + H2O. Its function is as follows. Involved in unsaturated fatty acids biosynthesis. Catalyzes the dehydration of short chain beta-hydroxyacyl-ACPs and long chain saturated and unsaturated beta-hydroxyacyl-ACPs. The sequence is that of 3-hydroxyacyl-[acyl-carrier-protein] dehydratase FabZ from Bartonella quintana (strain Toulouse) (Rochalimaea quintana).